We begin with the raw amino-acid sequence, 675 residues long: Protein kintoun (675 aa).

Disordered regions lie at residues 98–131, 265–293, 310–340, and 509–659; these read ASKKQQQEQEKQEKEQQQQAAGAGKPEGPGKQGA, AGEGAGGRVRPRPDVPGVPDLPGAKTAPP, EGGAGSSSRSTFSFDKSRKAGGTEAAGAVAK, and EAAH…AAPT. Over residues 102-113 the composition is skewed to basic and acidic residues; it reads QQQEQEKQEKEQ. A compositionally biased stretch (low complexity) spans 279-293; sequence VPGVPDLPGAKTAPP. Over residues 529-543 the composition is skewed to low complexity; it reads AAAASSGAAPAPAAA. The span at 544-553 shows a compositional bias: acidic residues; the sequence is SEEEEEEDKE. Positions 564–577 are enriched in low complexity; the sequence is DPAAAAAAAGASSG. Positions 579-596 are enriched in basic and acidic residues; it reads ELTENERKWRELHARQQQ. 2 stretches are compositionally biased toward low complexity: residues 604-617 and 628-659; these read AAEAAAAAAAAAAE and VAQGGAAAAAESVAAAKQQVQQQPVAAAAAPT.

The protein belongs to the PIH1 family. Kintoun subfamily.

It localises to the cytoplasm. Required for cytoplasmic pre-assembly of axonemal dyneins, thereby playing a central role in motility in cilia and flagella. Involved in pre-assembly of dynein arm complexes in the cytoplasm before intraflagellar transport loads them for the ciliary compartment. This chain is Protein kintoun (pf13), found in Chlamydomonas reinhardtii (Chlamydomonas smithii).